Here is a 453-residue protein sequence, read N- to C-terminus: DNA repair protein RadA (453 aa).

A C4-type zinc finger spans residues 10–27 (CQECGYQSPKYLGRCPNC). 95 to 102 (GDPGIGKS) provides a ligand contact to ATP. Residues 251–255 (KNRFG) carry the RadA KNRFG motif motif. The interval 350-453 (DAYLKSAGGV…VGQVLNAVFS (104 aa)) is lon-protease-like.

It belongs to the RecA family. RadA subfamily.

In terms of biological role, DNA-dependent ATPase involved in processing of recombination intermediates, plays a role in repairing DNA breaks. Stimulates the branch migration of RecA-mediated strand transfer reactions, allowing the 3' invading strand to extend heteroduplex DNA faster. Binds ssDNA in the presence of ADP but not other nucleotides, has ATPase activity that is stimulated by ssDNA and various branched DNA structures, but inhibited by SSB. Does not have RecA's homology-searching function. This chain is DNA repair protein RadA, found in Streptococcus pyogenes serotype M1.